The primary structure comprises 226 residues: MLFNLIHNIHKEGYIFIMISFLASCIGFAISCSLGIVCLAMSLLCIFFFRDPIRVVPEGDNLITSPADGLILDIKEVNSPIDSSTQVVCISIFLNILNVHVNRIPVSGTIKSTEYIPGRFISASLDKSSELNERQRLIIESNLDKHLIILDQIAGLIARRIVCNAYQGQNVNLGEKFGIIRFGSRVNIYLPLSTHISVFKGQTVIAGETILAYLKEAPKQLTVKSI.

Catalysis depends on Ser184, which acts as the Schiff-base intermediate with substrate; via pyruvic acid. Position 184 is a pyruvic acid (Ser); by autocatalysis (Ser184).

This sequence belongs to the phosphatidylserine decarboxylase family. PSD-A subfamily. In terms of assembly, heterodimer of a large membrane-associated beta subunit and a small pyruvoyl-containing alpha subunit. Pyruvate is required as a cofactor. Is synthesized initially as an inactive proenzyme. Formation of the active enzyme involves a self-maturation process in which the active site pyruvoyl group is generated from an internal serine residue via an autocatalytic post-translational modification. Two non-identical subunits are generated from the proenzyme in this reaction, and the pyruvate is formed at the N-terminus of the alpha chain, which is derived from the carboxyl end of the proenzyme. The post-translation cleavage follows an unusual pathway, termed non-hydrolytic serinolysis, in which the side chain hydroxyl group of the serine supplies its oxygen atom to form the C-terminus of the beta chain, while the remainder of the serine residue undergoes an oxidative deamination to produce ammonia and the pyruvoyl prosthetic group on the alpha chain.

It is found in the cell membrane. It catalyses the reaction a 1,2-diacyl-sn-glycero-3-phospho-L-serine + H(+) = a 1,2-diacyl-sn-glycero-3-phosphoethanolamine + CO2. It participates in phospholipid metabolism; phosphatidylethanolamine biosynthesis; phosphatidylethanolamine from CDP-diacylglycerol: step 2/2. Functionally, catalyzes the formation of phosphatidylethanolamine (PtdEtn) from phosphatidylserine (PtdSer). This is Phosphatidylserine decarboxylase proenzyme from Ehrlichia canis (strain Jake).